Consider the following 429-residue polypeptide: Enolase (429 aa).

Position 163 (Gln-163) interacts with (2R)-2-phosphoglycerate. Glu-205 serves as the catalytic Proton donor. Positions 242, 285, and 312 each coordinate Mg(2+). Positions 337, 366, 367, and 388 each coordinate (2R)-2-phosphoglycerate. Lys-337 functions as the Proton acceptor in the catalytic mechanism.

This sequence belongs to the enolase family. The cofactor is Mg(2+).

It is found in the cytoplasm. Its subcellular location is the secreted. The protein resides in the cell surface. It catalyses the reaction (2R)-2-phosphoglycerate = phosphoenolpyruvate + H2O. The protein operates within carbohydrate degradation; glycolysis; pyruvate from D-glyceraldehyde 3-phosphate: step 4/5. Its function is as follows. Catalyzes the reversible conversion of 2-phosphoglycerate (2-PG) into phosphoenolpyruvate (PEP). It is essential for the degradation of carbohydrates via glycolysis. The polypeptide is Enolase (Aromatoleum aromaticum (strain DSM 19018 / LMG 30748 / EbN1) (Azoarcus sp. (strain EbN1))).